Here is a 165-residue protein sequence, read N- to C-terminus: Choriogonadotropin subunit beta 7 (165 aa).

Positions 1-20 are cleaved as a signal peptide; the sequence is MEMFQGLLLLLLLSMGGTWA. 6 disulfide bridges follow: Cys-29-Cys-77, Cys-43-Cys-92, Cys-46-Cys-130, Cys-54-Cys-108, Cys-58-Cys-110, and Cys-113-Cys-120. N-linked (GlcNAc...) asparagine glycosylation is found at Asn-33 and Asn-50. A disordered region spans residues 131 to 165; sequence DDPRFQASSSSKAPPPSLPSPSRLPGPSDTPILPQ. Residues Ser-141, Ser-147, Ser-152, and Ser-158 are each glycosylated (O-linked (GalNAc...) serine). A compositionally biased stretch (pro residues) spans 143–154; it reads APPPSLPSPSRL.

Belongs to the glycoprotein hormones subunit beta family. Heterodimer of a common alpha chain identical in LH, FSH, TSH and HCG and a unique beta chain distinct in each of the hormones and confers receptor and biological specificity. As to expression, high expression in the placenta throughout pregnancy.

It localises to the secreted. Its function is as follows. Beta subunit of the human chorionic gonadotropin (hCG). hCG is a complex glycoprotein composed of two glycosylated subunits alpha and beta which are non-covalently associated. The alpha subunit is identical to those in the pituitary gonadotropin hormones (LH, FSH and TSH). The beta subunits are distinct in each of the hormones and confer receptor and biological specificity. Has an essential role for pregnancy and maternal adaptation. Stimulates the ovaries to synthesize the steroids that are essential for the maintenance of pregnancy. The chain is Choriogonadotropin subunit beta 7 from Homo sapiens (Human).